The sequence spans 36 residues: Cytochrome b6-f complex subunit 5 (36 aa).

Residues 5 to 25 (LLAGIVLGLVPVTLAGLFVAA) form a helical membrane-spanning segment.

The protein belongs to the PetG family. As to quaternary structure, the 4 large subunits of the cytochrome b6-f complex are cytochrome b6, subunit IV (17 kDa polypeptide, PetD), cytochrome f and the Rieske protein, while the 4 small subunits are PetG, PetL, PetM and PetN. The complex functions as a dimer.

The protein resides in the cellular thylakoid membrane. Functionally, component of the cytochrome b6-f complex, which mediates electron transfer between photosystem II (PSII) and photosystem I (PSI), cyclic electron flow around PSI, and state transitions. PetG is required for either the stability or assembly of the cytochrome b6-f complex. The protein is Cytochrome b6-f complex subunit 5 of Acaryochloris marina (strain MBIC 11017).